We begin with the raw amino-acid sequence, 402 residues long: MHEYPVVLVINSGSSSIKFSVLDAQRCEVLLAGIAEGINSGSATLSVNGAAPVALAQRGYEPALAAICAELEKRSLIDSVALIGHRVAHGGNLFQQSAIVDDEVMEKIRRISPLAPLHNYANLSGMVSARHLFPGVTQVAVFDTSFHQTLAPEAWLYALPYRYAQEYGVRRYGFHGTSHRYVSQRAHHLLGLSEADSGLVIAHLGNGASICAVRNGRSVDTSMGMTPLEGLMMGTRSGDVDFGALAWIASQTGQSIADLEQMVNTESGLLGISGLSSDLRVLERAQREGHQRADLAIRTFVHRIARHIGGHAASLRRLDGIIFTGGIGENSALIRRMVLEHLSVFGITLAPDKNNMPGSAGERIISGEDSAVICAVIPTDEERMIALDALRLGKIMPSIEYA.

Positions 11 and 18 each coordinate ATP. A Mg(2+)-binding site is contributed by Asn11. Residue Arg86 coordinates substrate. Asp143 acts as the Proton donor/acceptor in catalysis. ATP is bound by residues His175, 203 to 207 (HLGNG), 278 to 280 (DLR), and 326 to 330 (GIGEN).

The protein belongs to the acetokinase family. TdcD subfamily. As to quaternary structure, homodimer. Mg(2+) serves as cofactor.

The enzyme catalyses propanoate + ATP = propanoyl phosphate + ADP. The protein operates within amino-acid degradation; L-threonine degradation via propanoate pathway; propanoate from L-threonine: step 4/4. Catalyzes the conversion of propionyl phosphate and ADP to propionate and ATP. This is Propionate kinase from Edwardsiella piscicida.